The chain runs to 461 residues: Cysteine--tRNA ligase (461 aa).

Residue Cys28 coordinates Zn(2+). The short motif at 30–40 (VTIYDLCHIGH) is the 'HIGH' region element. Cys209, His234, and Glu238 together coordinate Zn(2+). Positions 266-270 (KMSKS) match the 'KMSKS' region motif. Lys269 provides a ligand contact to ATP.

It belongs to the class-I aminoacyl-tRNA synthetase family. In terms of assembly, monomer. The cofactor is Zn(2+).

It is found in the cytoplasm. The catalysed reaction is tRNA(Cys) + L-cysteine + ATP = L-cysteinyl-tRNA(Cys) + AMP + diphosphate. The protein is Cysteine--tRNA ligase of Serratia proteamaculans (strain 568).